Consider the following 150-residue polypeptide: Small ribosomal subunit protein uS9 (150 aa).

The protein belongs to the universal ribosomal protein uS9 family.

The polypeptide is Small ribosomal subunit protein uS9 (Mycolicibacterium smegmatis (strain ATCC 700084 / mc(2)155) (Mycobacterium smegmatis)).